Here is a 314-residue protein sequence, read N- to C-terminus: Methionyl-tRNA formyltransferase (314 aa).

Residue 110 to 113 (SLLP) participates in (6S)-5,6,7,8-tetrahydrofolate binding.

This sequence belongs to the Fmt family.

It catalyses the reaction L-methionyl-tRNA(fMet) + (6R)-10-formyltetrahydrofolate = N-formyl-L-methionyl-tRNA(fMet) + (6S)-5,6,7,8-tetrahydrofolate + H(+). Attaches a formyl group to the free amino group of methionyl-tRNA(fMet). The formyl group appears to play a dual role in the initiator identity of N-formylmethionyl-tRNA by promoting its recognition by IF2 and preventing the misappropriation of this tRNA by the elongation apparatus. In Bacillus mycoides (strain KBAB4) (Bacillus weihenstephanensis), this protein is Methionyl-tRNA formyltransferase.